A 275-amino-acid chain; its full sequence is Membrane protein insertase YidC 1 (275 aa).

The signal sequence occupies residues 1–25 (MRKVLRVKKNIKIARIVPLVLLLVA). A lipid anchor (N-palmitoyl cysteine) is attached at Cys26. Cys26 carries S-diacylglycerol cysteine lipidation. The next 5 membrane-spanning stretches (helical) occupy residues 58–78 (SIGV…MPLF), 129–149 (YASL…FQAL), 171–191 (LYLL…LTNL), 198–216 (VMMT…FMGF), and 222–240 (VVLY…LLLL).

The protein belongs to the OXA1/ALB3/YidC family. Type 2 subfamily.

The protein localises to the cell membrane. Functionally, required for the insertion and/or proper folding and/or complex formation of integral membrane proteins into the membrane. Involved in integration of membrane proteins that insert both dependently and independently of the Sec translocase complex, as well as at least some lipoproteins. This chain is Membrane protein insertase YidC 1, found in Streptococcus pyogenes serotype M1.